An 899-amino-acid polypeptide reads, in one-letter code: Translation initiation factor IF-2 (899 aa).

3 disordered regions span residues 115-137 (EAKA…LQTE), 170-189 (RGGG…EQKK), and 262-309 (DREI…HGFE). The tr-type G domain maps to 399–568 (TRPPVVTIMG…LIQSELMELK (170 aa)). Residues 408–415 (GHVDHGKT) form a G1 region. Residue 408–415 (GHVDHGKT) participates in GTP binding. The tract at residues 433–437 (GITQH) is G2. Residues 454–457 (DTPG) form a G3 region. GTP contacts are provided by residues 454–458 (DTPGH) and 508–511 (NKMD). Residues 508-511 (NKMD) form a G4 region. Residues 544–546 (SAH) form a G5 region.

This sequence belongs to the TRAFAC class translation factor GTPase superfamily. Classic translation factor GTPase family. IF-2 subfamily.

It is found in the cytoplasm. One of the essential components for the initiation of protein synthesis. Protects formylmethionyl-tRNA from spontaneous hydrolysis and promotes its binding to the 30S ribosomal subunits. Also involved in the hydrolysis of GTP during the formation of the 70S ribosomal complex. This is Translation initiation factor IF-2 from Acinetobacter baumannii (strain SDF).